We begin with the raw amino-acid sequence, 199 residues long: Hematopoietic prostaglandin D synthase (199 aa).

The GST N-terminal domain occupies 2-79 (PNYKLLYFNM…YLTKNTDLAG (78 aa)). Glutathione contacts are provided by residues Tyr-8, Arg-14, Trp-39, 49-51 (GKI), and 63-64 (QS). A GST C-terminal domain is found at 81–199 (TELEQCQVDA…WILKRPQTKL (119 aa)).

The protein belongs to the GST superfamily. Sigma family. In terms of assembly, homodimer. Requires glutathione as cofactor. Highly expressed in spleen and bone marrow. Lower levels of expression in small intestine, colon, liver, pancreas and skin. Not detected in brain, heart, lung or kidney (at protein level).

Its subcellular location is the cytoplasm. The enzyme catalyses prostaglandin H2 = prostaglandin D2. The catalysed reaction is RX + glutathione = an S-substituted glutathione + a halide anion + H(+). It catalyses the reaction 2-glyceryl-prostaglandin H2 = 2-glyceryl-prostaglandin D2. Its function is as follows. Bifunctional enzyme which catalyzes both the conversion of PGH2 to PGD2, a prostaglandin involved in smooth muscle contraction/relaxation and a potent inhibitor of platelet aggregation, and the conjugation of glutathione with a wide range of aryl halides and organic isothiocyanates. Also exhibits low glutathione-peroxidase activity towards cumene hydroperoxide. The sequence is that of Hematopoietic prostaglandin D synthase from Rattus norvegicus (Rat).